Consider the following 88-residue polypeptide: Small ribosomal subunit protein bS18 (88 aa).

This sequence belongs to the bacterial ribosomal protein bS18 family. In terms of assembly, part of the 30S ribosomal subunit. Forms a tight heterodimer with protein bS6.

Functionally, binds as a heterodimer with protein bS6 to the central domain of the 16S rRNA, where it helps stabilize the platform of the 30S subunit. In Aliarcobacter butzleri (strain RM4018) (Arcobacter butzleri), this protein is Small ribosomal subunit protein bS18.